A 390-amino-acid polypeptide reads, in one-letter code: Glutamate 5-kinase (390 aa).

Residue K29 coordinates ATP. Substrate is bound by residues S69, D156, and N168. Residue 188–189 coordinates ATP; sequence TD. A PUA domain is found at 295–374; it reads SGSLIVDAGA…EQFDRILGNN (80 aa).

This sequence belongs to the glutamate 5-kinase family.

The protein resides in the cytoplasm. It catalyses the reaction L-glutamate + ATP = L-glutamyl 5-phosphate + ADP. It functions in the pathway amino-acid biosynthesis; L-proline biosynthesis; L-glutamate 5-semialdehyde from L-glutamate: step 1/2. Catalyzes the transfer of a phosphate group to glutamate to form L-glutamate 5-phosphate. This chain is Glutamate 5-kinase, found in Psychrobacter cryohalolentis (strain ATCC BAA-1226 / DSM 17306 / VKM B-2378 / K5).